The following is a 267-amino-acid chain: 2-keto-3-deoxy-L-rhamnonate aldolase (267 aa).

The Proton acceptor role is filled by H49. Substrate is bound at residue Q151. E153 lines the Mg(2+) pocket. 2 residues coordinate substrate: A178 and D179. Residue D179 coordinates Mg(2+).

It belongs to the HpcH/HpaI aldolase family. KDR aldolase subfamily. In terms of assembly, homohexamer. Mg(2+) is required as a cofactor.

The catalysed reaction is 2-dehydro-3-deoxy-L-rhamnonate = (S)-lactaldehyde + pyruvate. In terms of biological role, catalyzes the reversible retro-aldol cleavage of 2-keto-3-deoxy-L-rhamnonate (KDR) to pyruvate and lactaldehyde. The polypeptide is 2-keto-3-deoxy-L-rhamnonate aldolase (Salmonella enteritidis PT4 (strain P125109)).